We begin with the raw amino-acid sequence, 216 residues long: Small ribosomal subunit protein uS4 (216 aa).

An S4 RNA-binding domain is found at 111–175 (RRLQTQVLRL…SPLVSESHPE (65 aa)). Residues 194–216 (VAEAKQAKEKPPERGGRKRRGRR) form a disordered region. The span at 198–208 (KQAKEKPPERG) shows a compositional bias: basic and acidic residues.

It belongs to the universal ribosomal protein uS4 family. As to quaternary structure, part of the 30S ribosomal subunit. Contacts protein S5. The interaction surface between S4 and S5 is involved in control of translational fidelity.

Its function is as follows. One of the primary rRNA binding proteins, it binds directly to 16S rRNA where it nucleates assembly of the body of the 30S subunit. Functionally, with S5 and S12 plays an important role in translational accuracy. The chain is Small ribosomal subunit protein uS4 from Methanosarcina barkeri (strain Fusaro / DSM 804).